The primary structure comprises 636 residues: Endoglucanase 4 (636 aa).

The signal sequence occupies residues 1–25 (MTRRWSFLVQCFTFKKKEGVRSRYM). Aspartate 82 (nucleophile) is an active-site residue. Active-site residues include histidine 400, aspartate 438, and glutamate 447. The region spanning 478–635 (KVEDEFFVEA…GDLVFGTLPN (158 aa)) is the CBM3 domain.

This sequence belongs to the glycosyl hydrolase 9 (cellulase E) family.

The protein localises to the secreted. The enzyme catalyses Endohydrolysis of (1-&gt;4)-beta-D-glucosidic linkages in cellulose, lichenin and cereal beta-D-glucans.. In Bacillus sp. (strain KSM-522), this protein is Endoglucanase 4.